A 154-amino-acid polypeptide reads, in one-letter code: Large ribosomal subunit protein uL30 (154 aa).

The disordered stretch occupies residues 114-146; it reads PTLRLHPPRGGHDGVKHPVKEGGQLGKHDTEGI. Residues 123-144 are compositionally biased toward basic and acidic residues; that stretch reads GGHDGVKHPVKEGGQLGKHDTE.

This sequence belongs to the universal ribosomal protein uL30 family. In terms of assembly, part of the 50S ribosomal subunit. Binds 5S rRNA.

Functionally, this is one of 5 proteins that mediate the attachment of the 5S rRNA onto the large ribosomal subunit, stabilizing the orientation of adjacent RNA domains. The sequence is that of Large ribosomal subunit protein uL30 from Haloarcula marismortui (strain ATCC 43049 / DSM 3752 / JCM 8966 / VKM B-1809) (Halobacterium marismortui).